A 234-amino-acid polypeptide reads, in one-letter code: MLFSPPLQRATLIQRYKRFLADVITPDGTTLTLHCPNTGAMTGCATPGDTVWYSTSENTKRKYPHTWELTETQSGAFICVNTLRANQLTKEAIQENRLPALAGYNILKSEVKYGAERSRIDFMLQADFRPDCYIEVKSVTLAEKENGYFPDAITERGQKHLRELMGVAAAGHRAVVVFAVLHSAITRFSPARHIDIKYAQLLSEAQNKGVEVLAYKAELSAQKMELNEPVPITL.

Residues 201 to 220 constitute a DNA-binding region (H-T-H motif); it reads LLSEAQNKGVEVLAYKAELS.

This sequence belongs to the SfsA family.

In terms of biological role, binds to DNA non-specifically. Could be a regulatory factor involved in maltose metabolism. The polypeptide is Sugar fermentation stimulation protein A (Salmonella dublin (strain CT_02021853)).